The chain runs to 212 residues: External core antigen (212 aa).

A signal peptide spans 1–19 (MQLFHLCLIISCSCPTVQA). The tract at residues 25–27 (GWL) is HBEAG. The disordered stretch occupies residues 165-212 (NAPILSTLPETTVVRRRGRSPRRRTPSPRRRRSQSPRRRRSQSRESQC). Positions 178 to 205 (VRRRGRSPRRRTPSPRRRRSQSPRRRRS) are enriched in basic residues. The 1; half-length repeat unit spans residues 184–190 (SPRRRTP). The interval 184-206 (SPRRRTPSPRRRRSQSPRRRRSQ) is 3 X 8 AA repeats of S-P-R-R-R-R-S-Q. Positions 184-212 (SPRRRTPSPRRRRSQSPRRRRSQSRESQC) are excised as a propeptide. 2 consecutive repeat copies span residues 191-198 (SPRRRRSQ) and 199-206 (SPRRRRSQ).

The protein belongs to the orthohepadnavirus precore antigen family. As to quaternary structure, homodimerizes. Phosphorylated. Post-translationally, cleaved by host furin.

The protein resides in the secreted. Its subcellular location is the host nucleus. May regulate immune response to the intracellular capsid in acting as a T-cell tolerogen, by having an immunoregulatory effect which prevents destruction of infected cells by cytotoxic T-cells. This immune regulation may predispose to chronicity during perinatal infections and prevent severe liver injury during adult infections. This chain is External core antigen, found in Homo sapiens (Human).